The primary structure comprises 884 residues: Protein P (884 aa).

Residues 1–184 are terminal protein domain (TP); the sequence is MHPFSRLFRN…GKPYSWEHRQ (184 aa). The tract at residues 185–387 is spacer; sequence LVQHNGQQHK…YCIHHIVSSL (203 aa). The tract at residues 299–345 is disordered; it reads RNSGHTTWFSSASNSNKSRSREKAYSSNSTSKRYSPPLNYEKSDFSS. Residues 388–729 form a polymerase/reverse transcriptase domain (RT) region; sequence DDWGPCTVTG…YEELWPVVRQ (342 aa). The region spanning 398–639 is the Reverse transcriptase domain; it reads DVTIKSPRTP…NHLHFMGYVI (242 aa). Asp470, Asp590, and Asp591 together coordinate Mg(2+).

It belongs to the hepadnaviridae P protein family.

The catalysed reaction is DNA(n) + a 2'-deoxyribonucleoside 5'-triphosphate = DNA(n+1) + diphosphate. It carries out the reaction Endonucleolytic cleavage to 5'-phosphomonoester.. Activated by host HSP70 and HSP40 in vitro to be able to bind the epsilon loop of the pgRNA. Because deletion of the RNase H region renders the protein partly chaperone-independent, the chaperones may be needed indirectly to relieve occlusion of the RNA-binding site by this domain. Inhibited by several reverse-transcriptase inhibitors: Lamivudine, Adefovir and Entecavir. Functionally, multifunctional enzyme that converts the viral RNA genome into dsDNA in viral cytoplasmic capsids. This enzyme displays a DNA polymerase activity that can copy either DNA or RNA templates, and a ribonuclease H (RNase H) activity that cleaves the RNA strand of RNA-DNA heteroduplexes in a partially processive 3'- to 5'-endonucleasic mode. Neo-synthesized pregenomic RNA (pgRNA) are encapsidated together with the P protein, and reverse-transcribed inside the nucleocapsid. Initiation of reverse-transcription occurs first by binding the epsilon loop on the pgRNA genome, and is initiated by protein priming, thereby the 5'-end of (-)DNA is covalently linked to P protein. Partial (+)DNA is synthesized from the (-)DNA template and generates the relaxed circular DNA (RC-DNA) genome. After budding and infection, the RC-DNA migrates in the nucleus, and is converted into a plasmid-like covalently closed circular DNA (cccDNA). The activity of P protein does not seem to be necessary for cccDNA generation, and is presumably released from (+)DNA by host nuclear DNA repair machinery. The sequence is that of Protein P from Marmota monax (Woodchuck).